Consider the following 589-residue polypeptide: Zinc finger protein 131 (589 aa).

One can recognise a BTB domain in the interval 34 to 98 (TDITLIVDGH…TYTAKLMIQG (65 aa)). The Nuclear localization signal 1 signature appears at 137-148 (TGKNEAKKRKIA). Basic and acidic residues predominate over residues 224–234 (GDRKGQIKEDG). The interval 224-247 (GDRKGQIKEDGCPSDPTSKQEHMK) is disordered. 2 consecutive C2H2-type zinc fingers follow at residues 254–277 (FKCE…NCYH) and 294–316 (HVCQ…LRKH). Glycyl lysine isopeptide (Lys-Gly) (interchain with G-Cter in SUMO2) cross-links involve residues K255 and K261. A Nuclear localization signal 2 motif is present at residues 283-294 (VSKKQRTGKKIH). The C2H2-type 3; degenerate zinc-finger motif lies at 322-347 (FECPNCHERFARNSTLKCHLTACQTG). C2H2-type zinc fingers lie at residues 358 to 380 (YECQ…LVIH) and 386 to 409 (NHCT…SDAH). Residues 539–583 (NQEERESSQADAAEAAREDHEDAEDLETKPTVDSEAEKAENEDRT) show a composition bias toward basic and acidic residues. The interval 539–589 (NQEERESSQADAAEAAREDHEDAEDLETKPTVDSEAEKAENEDRTAMPVLE) is disordered. K567 participates in a covalent cross-link: Glycyl lysine isopeptide (Lys-Gly) (interchain with G-Cter in SUMO).

The protein belongs to the krueppel C2H2-type zinc-finger protein family. Monosumoylated at Lys-567 by CBX4 and UHRF2. Sumoylation may potentiate ZNF131 inhibition of estrogen signaling. Sumoylation does not interfere with ubiquitination. Post-translationally, ubiquitinated.

The protein localises to the nucleus. May be involved in transcriptional regulation as a repressor of ESR1/ER-alpha signaling. Plays a role during development and organogenesis as well as in the function of the adult central nervous system. The protein is Zinc finger protein 131 (ZNF131) of Pongo abelii (Sumatran orangutan).